The sequence spans 388 residues: Processive diacylglycerol beta-glucosyltransferase (388 aa).

The protein belongs to the glycosyltransferase 28 family. UgtP subfamily.

The protein resides in the cell membrane. It carries out the reaction a 1,2-diacyl-3-O-(beta-D-glucopyranosyl)-sn-glycerol + UDP-alpha-D-glucose = a 1,2-diacyl-3-O-(beta-D-Glc-(1-&gt;6)-beta-D-Glc)-sn-glycerol + UDP + H(+). It catalyses the reaction a 1,2-diacyl-3-O-(beta-D-Glc-(1-&gt;6)-beta-D-Glc)-sn-glycerol + UDP-alpha-D-glucose = a 1,2-diacyl-3-O-(beta-D-Glc-(1-&gt;6)-beta-D-Glc-(1-&gt;6)-beta-D-Glc)-sn-glycerol + UDP + H(+). The catalysed reaction is a 1,2-diacyl-sn-glycerol + UDP-alpha-D-glucose = a 1,2-diacyl-3-O-(beta-D-glucopyranosyl)-sn-glycerol + UDP + H(+). It functions in the pathway glycolipid metabolism; diglucosyl-diacylglycerol biosynthesis. In terms of biological role, processive glucosyltransferase involved in the biosynthesis of both the bilayer- and non-bilayer-forming membrane glucolipids. Is able to successively transfer up to three glucosyl residues to diacylglycerol (DAG), thereby catalyzing the formation of beta-monoglucosyl-DAG (3-O-(beta-D-glucopyranosyl)-1,2-diacyl-sn-glycerol), beta-diglucosyl-DAG (3-O-(beta-D-glucopyranosyl-beta-(1-&gt;6)-D-glucopyranosyl)-1,2-diacyl-sn-glycerol) and beta-triglucosyl-DAG (3-O-(beta-D-glucopyranosyl-beta-(1-&gt;6)-D-glucopyranosyl-beta-(1-&gt;6)-D-glucopyranosyl)-1,2-diacyl-sn-glycerol). Beta-diglucosyl-DAG is the predominant glycolipid found in Bacillales and is also used as a membrane anchor for lipoteichoic acid (LTA). This is Processive diacylglycerol beta-glucosyltransferase from Bacillus cereus (strain AH187).